A 66-amino-acid chain; its full sequence is DNA-directed RNA polymerase subunit Rpo10 (66 aa).

Zn(2+)-binding residues include cysteine 7, cysteine 10, cysteine 44, and cysteine 45.

This sequence belongs to the archaeal Rpo10/eukaryotic RPB10 RNA polymerase subunit family. In terms of assembly, part of the RNA polymerase complex. Requires Zn(2+) as cofactor.

It localises to the cytoplasm. The catalysed reaction is RNA(n) + a ribonucleoside 5'-triphosphate = RNA(n+1) + diphosphate. Its function is as follows. DNA-dependent RNA polymerase (RNAP) catalyzes the transcription of DNA into RNA using the four ribonucleoside triphosphates as substrates. The protein is DNA-directed RNA polymerase subunit Rpo10 of Pyrobaculum aerophilum (strain ATCC 51768 / DSM 7523 / JCM 9630 / CIP 104966 / NBRC 100827 / IM2).